The following is a 431-amino-acid chain: CCA tRNA nucleotidyltransferase 1, mitochondrial (431 aa).

The transit peptide at 1-31 directs the protein to the mitochondrion; that stretch reads MWAKLFLRPSFVNRVHLTWSCRALLTMQLKT. ATP contacts are provided by glycine 61 and arginine 64. CTP is bound by residues glycine 61 and arginine 64. Mg(2+) contacts are provided by aspartate 74 and aspartate 76. ATP contacts are provided by arginine 148, aspartate 191, arginine 194, arginine 197, and arginine 200. CTP-binding residues include arginine 148, aspartate 191, arginine 194, arginine 197, and arginine 200.

It belongs to the tRNA nucleotidyltransferase/poly(A) polymerase family. As to quaternary structure, monomer, and homodimer. Mg(2+) serves as cofactor. In terms of tissue distribution, expressed ubiquitously during early embryogenesis.

It localises to the mitochondrion. It is found in the cytoplasm. The protein localises to the nucleus. It carries out the reaction a tRNA precursor + 2 CTP + ATP = a tRNA with a 3' CCA end + 3 diphosphate. The enzyme catalyses a tRNA with a 3' CCA end + 2 CTP + ATP = a tRNA with a 3' CCACCA end + 3 diphosphate. Its function is as follows. Nucleotidyltransferase that catalyzes the addition and repair of the essential 3'-terminal CCA sequence in tRNAs, which is necessary for the attachment of amino acids to the 3' terminus of tRNA molecules, using CTP and ATP as substrates. tRNA 3'-terminal CCA addition is required both for tRNA processing and repair. Promotes tRNA repair and recycling downstream of the ribosome-associated quality control (RQC) pathway by mediating addition of the tRNA 3'-terminal CCA following cleavage by ankzf1 and repair by elac1. Also involved in tRNA surveillance by mediating tandem CCA addition to generate a CCACCA at the 3' terminus of unstable tRNAs and tRNA-like transcripts. While stable tRNAs receive only 3'-terminal CCA, unstable tRNAs beginning with GG are marked with CCACCA and rapidly degraded. The structural flexibility of RNA controls the choice between CCA versus CCACCA addition: following the first CCA addition cycle, nucleotide-binding to the active site triggers a clockwise screw motion, producing torque on the RNA. This ejects stable RNAs, whereas unstable RNAs are refolded while bound to the enzyme and subjected to a second CCA catalytic cycle. In Danio rerio (Zebrafish), this protein is CCA tRNA nucleotidyltransferase 1, mitochondrial.